The following is a 574-amino-acid chain: Glutamyl-tRNA(Gln) amidotransferase subunit B, mitochondrial (574 aa).

It belongs to the GatB/GatE family. GatB subfamily. As to quaternary structure, subunit of the heterotrimeric GatCAB amidotransferase (AdT) complex, composed of A, B and C subunits.

The protein resides in the mitochondrion. It catalyses the reaction L-glutamyl-tRNA(Gln) + L-glutamine + ATP + H2O = L-glutaminyl-tRNA(Gln) + L-glutamate + ADP + phosphate + H(+). Its function is as follows. Allows the formation of correctly charged Gln-tRNA(Gln) through the transamidation of misacylated Glu-tRNA(Gln) in the mitochondria. The reaction takes place in the presence of glutamine and ATP through an activated gamma-phospho-Glu-tRNA(Gln). The sequence is that of Glutamyl-tRNA(Gln) amidotransferase subunit B, mitochondrial from Phytophthora infestans (strain T30-4) (Potato late blight agent).